We begin with the raw amino-acid sequence, 219 residues long: Vesicle-associated membrane protein 721 (219 aa).

Over 1–196 (MAQQSLIYSF…MWLQNMKIKL (196 aa)) the chain is Cytoplasmic. The region spanning 10–114 (FVARGTVILV…SLNKEFGSKL (105 aa)) is the Longin domain. The region spanning 130-190 (KLAKVKAQVS…TQMRRKMWLQ (61 aa)) is the v-SNARE coiled-coil homology domain. Residues 197–217 (IVLAIIIALILIIVLSVCHGF) form a helical; Anchor for type IV membrane protein membrane-spanning segment. Topologically, residues 218–219 (KC) are vesicular.

Belongs to the synaptobrevin family. Expressed in flowers, leaves, stems and roots.

Its subcellular location is the cell membrane. The protein localises to the early endosome membrane. Its function is as follows. Involved in the targeting and/or fusion of transport vesicles to their target membrane. The sequence is that of Vesicle-associated membrane protein 721 from Arabidopsis thaliana (Mouse-ear cress).